The sequence spans 181 residues: Large ribosomal subunit protein eL18 (181 aa).

The segment at 152-181 (WGKAPGQRGSHSAPYVRSEGRKFERAHGLK) is disordered. Positions 169-181 (SEGRKFERAHGLK) are enriched in basic and acidic residues.

It belongs to the eukaryotic ribosomal protein eL18 family.

It localises to the cytoplasm. The polypeptide is Large ribosomal subunit protein eL18 (RPL18) (Tetrahymena thermophila).